Reading from the N-terminus, the 284-residue chain is 4-hydroxy-3-methylbut-2-enyl diphosphate reductase (284 aa).

Cys-12 contributes to the [4Fe-4S] cluster binding site. (2E)-4-hydroxy-3-methylbut-2-enyl diphosphate-binding residues include His-40 and His-76. The dimethylallyl diphosphate site is built by His-40 and His-76. Residues His-40 and His-76 each contribute to the isopentenyl diphosphate site. Cys-98 is a [4Fe-4S] cluster binding site. A (2E)-4-hydroxy-3-methylbut-2-enyl diphosphate-binding site is contributed by His-126. His-126 is a dimethylallyl diphosphate binding site. His-126 lines the isopentenyl diphosphate pocket. Glu-128 functions as the Proton donor in the catalytic mechanism. Thr-161 provides a ligand contact to (2E)-4-hydroxy-3-methylbut-2-enyl diphosphate. Cys-191 is a [4Fe-4S] cluster binding site. 4 residues coordinate (2E)-4-hydroxy-3-methylbut-2-enyl diphosphate: Ser-219, Ser-220, Asn-221, and Ser-263. Residues Ser-219, Ser-220, Asn-221, and Ser-263 each contribute to the dimethylallyl diphosphate site. The isopentenyl diphosphate site is built by Ser-219, Ser-220, Asn-221, and Ser-263.

Belongs to the IspH family. [4Fe-4S] cluster is required as a cofactor.

The catalysed reaction is isopentenyl diphosphate + 2 oxidized [2Fe-2S]-[ferredoxin] + H2O = (2E)-4-hydroxy-3-methylbut-2-enyl diphosphate + 2 reduced [2Fe-2S]-[ferredoxin] + 2 H(+). The enzyme catalyses dimethylallyl diphosphate + 2 oxidized [2Fe-2S]-[ferredoxin] + H2O = (2E)-4-hydroxy-3-methylbut-2-enyl diphosphate + 2 reduced [2Fe-2S]-[ferredoxin] + 2 H(+). Its pathway is isoprenoid biosynthesis; dimethylallyl diphosphate biosynthesis; dimethylallyl diphosphate from (2E)-4-hydroxy-3-methylbutenyl diphosphate: step 1/1. It functions in the pathway isoprenoid biosynthesis; isopentenyl diphosphate biosynthesis via DXP pathway; isopentenyl diphosphate from 1-deoxy-D-xylulose 5-phosphate: step 6/6. In terms of biological role, catalyzes the conversion of 1-hydroxy-2-methyl-2-(E)-butenyl 4-diphosphate (HMBPP) into a mixture of isopentenyl diphosphate (IPP) and dimethylallyl diphosphate (DMAPP). Acts in the terminal step of the DOXP/MEP pathway for isoprenoid precursor biosynthesis. The polypeptide is 4-hydroxy-3-methylbut-2-enyl diphosphate reductase (Petrotoga mobilis (strain DSM 10674 / SJ95)).